A 347-amino-acid chain; its full sequence is Protein-arginine kinase (347 aa).

The region spanning 22–247 is the Phosphagen kinase C-terminal domain; sequence LVVSTRIRLA…EQVIQAERHA (226 aa). ATP-binding positions include 25–29, H85, R118, 169–173, and 200–205; these read STRIR, RASVM, and RGRYGE. An RDXXRA motif of the pArg binding pocket involved in allosteric regulation motif is present at residues 330–335; the sequence is RDRERA.

Belongs to the ATP:guanido phosphotransferase family.

The enzyme catalyses L-arginyl-[protein] + ATP = N(omega)-phospho-L-arginyl-[protein] + ADP + H(+). Its activity is regulated as follows. Appears to be allosterically activated by the binding of pArg-containing polypeptides to the pArg-binding pocket localized in the C-terminal domain of McsB. Catalyzes the specific phosphorylation of arginine residues in proteins. The protein is Protein-arginine kinase of Exiguobacterium sp. (strain ATCC BAA-1283 / AT1b).